Reading from the N-terminus, the 448-residue chain is UPF0053 protein sll0260 (448 aa).

The CNNM transmembrane domain occupies phenylalanine 2–glutamate 203. The next 4 helical transmembrane spans lie at phenylalanine 11–valine 31, phenylalanine 62–glycine 82, leucine 106–valine 126, and valine 142–valine 162. CBS domains are found at residues methionine 222–isoleucine 281 and isoleucine 286–glutamate 345.

The protein belongs to the UPF0053 family.

It localises to the cell membrane. This chain is UPF0053 protein sll0260, found in Synechocystis sp. (strain ATCC 27184 / PCC 6803 / Kazusa).